The following is a 313-amino-acid chain: 4-hydroxyproline 2-epimerase (313 aa).

Positions 1–23 are disordered; the sequence is MHVIDSHTGGEPTRVILSGGPHL. C85 acts as the Proton acceptor in catalysis. Substrate is bound by residues 86–87, H205, and D231; that span reads GH. C235 acts as the Proton donor in catalysis. Substrate is bound at residue 236 to 237; sequence GT.

This sequence belongs to the proline racemase family.

It catalyses the reaction trans-4-hydroxy-L-proline = cis-4-hydroxy-D-proline. In terms of biological role, catalyzes the epimerization of trans-4-hydroxy-L-proline (t4LHyp) to cis-4-hydroxy-D-proline (c4DHyp). Is likely involved in a degradation pathway that converts t4LHyp to alpha-ketoglutarate. Displays no proline racemase activity. This chain is 4-hydroxyproline 2-epimerase, found in Ruegeria pomeroyi (strain ATCC 700808 / DSM 15171 / DSS-3) (Silicibacter pomeroyi).